Consider the following 347-residue polypeptide: Protease HtpX homolog (347 aa).

The next 4 membrane-spanning stretches (helical) occupy residues 8-28 (VALG…ATIA), 44-64 (AMAL…YLFV), 76-96 (LSFL…TYFA), and 141-163 (AFAY…LALT). Zn(2+) is bound at residue His174. The active site involves Glu175. His178 contributes to the Zn(2+) binding site. 2 helical membrane passes run 185–205 (AIML…VTAV) and 221–241 (ILAA…LLVL). Glu248 is a Zn(2+) binding site.

Belongs to the peptidase M48B family. The cofactor is Zn(2+).

It is found in the cell membrane. The protein is Protease HtpX homolog of Pyrobaculum aerophilum (strain ATCC 51768 / DSM 7523 / JCM 9630 / CIP 104966 / NBRC 100827 / IM2).